The sequence spans 132 residues: MALSDPIGDMLTRIRNGQRARKSSVMAPASTMRANVLDVLIREGYIRGYEKVDVRKGIAELRVELKYHEGEPVIREIARVSTPGRRVYSKIKDLPKVYNGLGISILSTPRGVMSDHEARQANVGGEVLCRVF.

Belongs to the universal ribosomal protein uS8 family. As to quaternary structure, part of the 30S ribosomal subunit. Contacts proteins S5 and S12.

One of the primary rRNA binding proteins, it binds directly to 16S rRNA central domain where it helps coordinate assembly of the platform of the 30S subunit. The protein is Small ribosomal subunit protein uS8 of Rhodospirillum rubrum (strain ATCC 11170 / ATH 1.1.1 / DSM 467 / LMG 4362 / NCIMB 8255 / S1).